The primary structure comprises 812 residues: Toll-like receptor 10 (812 aa).

The first 19 residues, 1–19, serve as a signal peptide directing secretion; sequence MRYIRSIYIFCSIVTSVRS. At 20-577 the chain is on the extracellular side; sequence GASELPEERE…VHLPEISCNT (558 aa). LRR repeat units follow at residues 24–46, 49–70, 73–94, 97–118, and 119–139; these read LPEE…PEGL, ITTT…DFRS, KLKV…TFEF, ELSY…SLAG, and LRHL…VETG. Asn33 is a glycosylation site (N-linked (GlcNAc...) asparagine). The N-linked (GlcNAc...) asparagine glycan is linked to Asn140. The stretch at 143–166 is one LRR 6 repeat; the sequence is HLETLGLSGAKIQKSDFQKIAHLQ. The N-linked (GlcNAc...) asparagine glycan is linked to Asn189. 4 LRR repeats span residues 296–321, 325–348, 350–373, and 374–395; these read SNTV…ESIY, TKMD…PMYP, RFQY…IQLP, and HLKT…SHFA. A glycan (N-linked (GlcNAc...) asparagine) is linked at Asn331. Asn397 is a glycosylation site (N-linked (GlcNAc...) asparagine). LRR repeat units follow at residues 399 to 420, 423 to 443, 445 to 467, 468 to 489, and 490 to 510; these read SLRH…NCLW, TLVT…GCLP, NIQI…THLT, SLRE…SHFR, and RLLV…DFFQ. Residue Asn428 is glycosylated (N-linked (GlcNAc...) asparagine). The 55-residue stretch at 523 to 577 folds into the LRRCT domain; sequence NPFRCTCELRDFIQLGKYSEGMMVGWSDSYICEYPLNLKGTQLKDVHLPEISCNT. Residues 578 to 598 form a helical membrane-spanning segment; the sequence is GLLIVTIVVVMLVLGMAVAFC. Topologically, residues 599 to 812 are cytoplasmic; that stretch reads CLHFDLPWYL…AISLIRTDCL (214 aa). The region spanning 633 to 776 is the TIR domain; sequence VQFHVFISYS…LFWANLRAAL (144 aa).

Belongs to the Toll-like receptor family. As to quaternary structure, binds MYD88 via their respective TIR domains.

Its subcellular location is the membrane. Functionally, participates in the innate immune response to microbial agents. Acts via MYD88 and TRAF6, leading to NF-kappa-B activation, cytokine secretion and the inflammatory response. The chain is Toll-like receptor 10 (TLR10) from Bos taurus (Bovine).